Reading from the N-terminus, the 116-residue chain is Nucleoid-associated protein EUBELI_02017 (116 aa).

A compositionally biased stretch (gly residues) spans 1-12 (MAKRGGFPGGMP). Residues 1–42 (MAKRGGFPGGMPGNMNNLMKQAQRMQRQMEEQQAELENKEFS) form a disordered region. Over residues 13 to 26 (GNMNNLMKQAQRMQ) the composition is skewed to low complexity.

It belongs to the YbaB/EbfC family. Homodimer.

It localises to the cytoplasm. It is found in the nucleoid. Functionally, binds to DNA and alters its conformation. May be involved in regulation of gene expression, nucleoid organization and DNA protection. The chain is Nucleoid-associated protein EUBELI_02017 from Lachnospira eligens (strain ATCC 27750 / DSM 3376 / VPI C15-48 / C15-B4) (Eubacterium eligens).